The following is a 1300-amino-acid chain: uncharacterized protein (1300 aa).

Positions 1–26 are cleaved as a signal peptide; that stretch reads MGYKLKRWPLVAFTFTGIGLGVVLAA. Cys27 carries N-palmitoyl cysteine lipidation. The S-diacylglycerol cysteine moiety is linked to residue Cys27. A compositionally biased stretch (low complexity) spans 464–478; the sequence is AMAAASTGADSSSGT. Disordered regions lie at residues 464-487, 620-639, 774-797, and 1244-1269; these read AMAA…SGGN, ASVS…DTQE, DSQK…NDKK, and KMSD…SPRT. Polar residues-rich tracts occupy residues 620–637 and 774–783; these read ASVS…STDT and DSQKSTNTVK. Positions 785–797 are enriched in basic and acidic residues; that stretch reads PDIKPTRENNDKK. Over residues 1257-1269 the composition is skewed to basic residues; that stretch reads TIRKPKPHHSPRT.

Belongs to the MG307/MG309/MG338 family.

Its subcellular location is the cell membrane. This is an uncharacterized protein from Mycoplasma pneumoniae (strain ATCC 29342 / M129 / Subtype 1) (Mycoplasmoides pneumoniae).